We begin with the raw amino-acid sequence, 247 residues long: 2,3-bisphosphoglycerate-dependent phosphoglycerate mutase (247 aa).

Substrate is bound by residues 13–20, 26–27, arginine 65, 92–95, lysine 103, 119–120, and 186–187; these read RHGESDWN, TG, ERHY, RR, and GN. Histidine 14 functions as the Tele-phosphohistidine intermediate in the catalytic mechanism. The active-site Proton donor/acceptor is glutamate 92.

It belongs to the phosphoglycerate mutase family. BPG-dependent PGAM subfamily. As to quaternary structure, homotetramer, dimer of dimers.

It catalyses the reaction (2R)-2-phosphoglycerate = (2R)-3-phosphoglycerate. It participates in carbohydrate degradation; glycolysis; pyruvate from D-glyceraldehyde 3-phosphate: step 3/5. Functionally, catalyzes the interconversion of 2-phosphoglycerate and 3-phosphoglycerate. The protein is 2,3-bisphosphoglycerate-dependent phosphoglycerate mutase of Mycobacterium leprae (strain Br4923).